Here is an 833-residue protein sequence, read N- to C-terminus: EF-hand domain-containing family member B (833 aa).

2 EF-hand domains span residues 561 to 596 and 597 to 632; these read QKFD…ANLS and LDDK…KDKM. The Ca(2+) site is built by Asp-574, Asp-578, Met-580, Glu-585, Asp-610, Asp-612, Asp-614, and Glu-621.

In terms of assembly, microtubule inner protein component of sperm flagellar doublet microtubules. Interacts with STIM1 and ORAI1; the interactions take place upon Ca(2+)-store depletion and dissociate through a Ca(2+)-dependent mechanism. Interaction with STIM1 inhibits STIM1 interaction with SARAF. As to expression, expressed in airway epithelial cells.

The protein localises to the cytoplasm. It localises to the cytoskeleton. The protein resides in the cilium axoneme. It is found in the flagellum axoneme. Functionally, microtubule inner protein (MIP) part of the dynein-decorated doublet microtubules (DMTs) in cilia axoneme, which is required for motile cilia beating. Cytosolic sensor for calcium, modulates the interaction of STIM1 and ORAI1 upon store depletion and the activation of store-operated Ca(2+) entry (SOCE) and NFAT translocation from cytosol to nucleus. In Homo sapiens (Human), this protein is EF-hand domain-containing family member B.